The sequence spans 84 residues: NAD(P)H-quinone oxidoreductase subunit O (84 aa).

This sequence belongs to the complex I NdhO subunit family. As to quaternary structure, NDH-1 can be composed of about 15 different subunits; different subcomplexes with different compositions have been identified which probably have different functions.

The protein resides in the cellular thylakoid membrane. It carries out the reaction a plastoquinone + NADH + (n+1) H(+)(in) = a plastoquinol + NAD(+) + n H(+)(out). The catalysed reaction is a plastoquinone + NADPH + (n+1) H(+)(in) = a plastoquinol + NADP(+) + n H(+)(out). NDH-1 shuttles electrons from an unknown electron donor, via FMN and iron-sulfur (Fe-S) centers, to quinones in the respiratory and/or the photosynthetic chain. The immediate electron acceptor for the enzyme in this species is believed to be plastoquinone. Couples the redox reaction to proton translocation, and thus conserves the redox energy in a proton gradient. Cyanobacterial NDH-1 also plays a role in inorganic carbon-concentration. This is NAD(P)H-quinone oxidoreductase subunit O from Synechococcus sp. (strain CC9605).